A 540-amino-acid polypeptide reads, in one-letter code: Pentatricopeptide repeat-containing protein At1g14470 (540 aa).

PPR repeat units follow at residues 70-104 (NVFV…GIMP), 105-134 (DAFS…GFFK), 135-165 (DPYV…ISQR), 166-196 (KGSD…MPEN), 197-227 (DVVS…MPEK), 228-262 (SVVS…GVRP), 263-297 (NETT…RVRL), 298-328 (NCFV…LGTQ), 330-364 (NLVT…NVVS), 365-395 (WNSL…GDSK), 397-431 (DEVT…QIKL), 432-462 (NDSG…MKER), 463-497 (DVVS…GIEP), and 498-528 (DRVT…IRNP).

Belongs to the PPR family. PCMP-A subfamily.

In Arabidopsis thaliana (Mouse-ear cress), this protein is Pentatricopeptide repeat-containing protein At1g14470 (PCMP-A4).